Consider the following 1531-residue polypeptide: Multidrug resistance-associated protein 1 (1531 aa).

The Extracellular portion of the chain corresponds to 1-33; it reads MALRGFCSADGSDPLWDWNVTWYTSNPDFTKCF. N19 carries N-linked (GlcNAc...) asparagine glycosylation. The chain crosses the membrane as a helical span at residues 34 to 54; it reads QNTVLVWVPCFYLWACFPFYF. The Cytoplasmic portion of the chain corresponds to 55 to 74; sequence LYLSRHDRGYIQMTLLNKTK. A helical membrane pass occupies residues 75–95; the sequence is TALGFLLWIVCWADLFYSFWE. Topologically, residues 96 to 100 are extracellular; it reads RSRGI. The helical transmembrane segment at 101-121 threads the bilayer; it reads FLAPVFLVSPTLLGITMLLAT. Residues 122–133 are Cytoplasmic-facing; the sequence is FLIQLERRKGVQ. Residues 134 to 154 traverse the membrane as a helical segment; it reads SSGIMLTFWLVALLCALAILR. The Extracellular segment spans residues 155–172; that stretch reads SKIMTALKEDVQVDLFRD. The helical transmembrane segment at 173 to 193 threads the bilayer; it reads MTFYVYFSLVLIQLVLSCFSD. Over 194–316 the chain is Cytoplasmic; that stretch reads RSPLFSETIH…KEWNPSLFKV (123 aa). Y277 bears the Phosphotyrosine mark. S289 carries the phosphoserine modification. The chain crosses the membrane as a helical span at residues 317 to 337; the sequence is LYKTFGPYFLMSFFFKAIHDL. In terms of domain architecture, ABC transmembrane type-1 1 spans 325–608; sequence FLMSFFFKAI…LPMVISSIVQ (284 aa). Over 338–363 the chain is Extracellular; the sequence is MMFSGPEILKLLINFVNDTKAPDWQG. Residues 364 to 384 form a helical membrane-spanning segment; it reads YFYTALLFVAACLQTLVLHQY. Topologically, residues 385 to 440 are cytoplasmic; that stretch reads FHICFVSGMRIKTAVIGAVYRKALVITNAARKSSTVGEIVNLMSVDAQRFMDLATY. The helical transmembrane segment at 441–461 threads the bilayer; the sequence is INMIWSAPLQVILALYLLWRN. The Extracellular portion of the chain corresponds to 462 to 464; the sequence is LGP. A helical transmembrane segment spans residues 465–485; that stretch reads PILAGVAVMVLMVPVNAVMAM. Over 486–547 the chain is Cytoplasmic; sequence KTKTYQVAHM…VLKKSAYLAA (62 aa). An N6-succinyllysine modification is found at K503. The chain crosses the membrane as a helical span at residues 548-568; the sequence is VGTFTWVCTPFLVALCTFAVY. Residues 569–590 are Extracellular-facing; it reads VTIDKNNVLDAQKAFVSLALFN. The chain crosses the membrane as a helical span at residues 591–611; it reads ILRFPLNILPMVISSIVQASV. Residues 612–967 are Cytoplasmic-facing; sequence SLKRLRIFLS…VKLSVYWDYM (356 aa). Residues 644 to 868 form the ABC transporter 1 domain; the sequence is ITVRNATFTW…DGAFAEFLRT (225 aa). 678-685 contributes to the ATP binding site; sequence GQVGCGKS. A disordered region spans residues 871-893; the sequence is SAEQEQDPEDNGVTGVSGPGKEA. S905, S915, and S930 each carry phosphoserine. Residues 917–938 are disordered; that stretch reads SSSYSGDVSRQHNSTAELQKDG. Residues 922-933 show a composition bias toward polar residues; it reads GDVSRQHNSTAE. Residues 968-988 traverse the membrane as a helical segment; it reads KAIGLFISFLSIFLFICNHVA. Residues 975 to 1256 form the ABC transmembrane type-1 2 domain; that stretch reads SFLSIFLFIC…LVRMSSEMET (282 aa). The Extracellular portion of the chain corresponds to 989 to 1025; that stretch reads ALASNYWLSLWTDDPIVNGTQEHTKVRLSVYGALGIS. N1006 carries an N-linked (GlcNAc...) asparagine glycan. The helical transmembrane segment at 1026 to 1046 threads the bilayer; that stretch reads QGIAVFGYSMAVSIGGILASR. The Cytoplasmic segment spans residues 1047-1089; the sequence is CLHVDLLHSILRSPMSFFERTPSGNLVNRFSKELDTVDSMIPE. The chain crosses the membrane as a helical span at residues 1090-1110; the sequence is VIKMFMGSLFNVIGACIVILL. A topological domain (extracellular) is located at residue A1111. Residues 1112–1132 traverse the membrane as a helical segment; it reads TPIAAIIIPPLGLIYFFVQRF. Residues 1133–1203 lie on the Cytoplasmic side of the membrane; that stretch reads YVASSRQLKR…VANRWLAVRL (71 aa). Residues 1204–1224 form a helical membrane-spanning segment; it reads ECVGNCIVLFAALFAVISRHS. At 1225 to 1226 the chain is on the extracellular side; sequence LS. Residues 1227–1247 form a helical membrane-spanning segment; sequence AGLVGLSVSYSLQVTTYLNWL. Over 1248-1531 the chain is Cytoplasmic; that stretch reads VRMSSEMETN…YNMARDAGLV (284 aa). Positions 1293-1527 constitute an ABC transporter 2 domain; sequence VEFRNYCLRY…RGLFYNMARD (235 aa). 1327–1334 is a binding site for ATP; the sequence is GRTGAGKS.

It belongs to the ABC transporter superfamily. ABCC family. Conjugate transporter (TC 3.A.1.208) subfamily.

The protein resides in the cell membrane. Its subcellular location is the basolateral cell membrane. The catalysed reaction is ATP + H2O + xenobioticSide 1 = ADP + phosphate + xenobioticSide 2.. It catalyses the reaction an S-substituted glutathione(in) + ATP + H2O = an S-substituted glutathione(out) + ADP + phosphate + H(+). The enzyme catalyses sphing-4-enine 1-phosphate(in) + ATP + H2O = sphing-4-enine 1-phosphate(out) + ADP + phosphate + H(+). It carries out the reaction leukotriene C4(in) + ATP + H2O = leukotriene C4(out) + ADP + phosphate + H(+). The catalysed reaction is 17beta-estradiol 17-O-(beta-D-glucuronate)(in) + ATP + H2O = 17beta-estradiol 17-O-(beta-D-glucuronate)(out) + ADP + phosphate + H(+). It catalyses the reaction daunorubicin(in) + ATP + H2O = daunorubicin(out) + ADP + phosphate + H(+). The enzyme catalyses vincristine(in) + ATP + H2O = vincristine(out) + ADP + phosphate + H(+). It carries out the reaction 2',3'-cGAMP(in) + ATP + H2O = 2',3'-cGAMP(out) + ADP + phosphate + H(+). The catalysed reaction is S-[(2E,6E,10E)-geranylgeranyl]-L-glutathione(in) + ATP + H2O = S-[(2E,6E,10E)-geranylgeranyl]-L-glutathione(out) + ADP + phosphate + H(+). It catalyses the reaction prostaglandin A2-S-(R)-glutathione(in) + ATP + H2O = prostaglandin A2-S-(R)-glutathione(out) + ADP + phosphate + H(+). The enzyme catalyses prostaglandin A2-S-(S)-glutathione(in) + ATP + H2O = prostaglandin A2-S-(S)-glutathione(out) + ADP + phosphate + H(+). With respect to regulation, MK 571 inhibits sphingosine 1-phosphate and leukotriene C4 export. In terms of biological role, mediates export of organic anions and drugs from the cytoplasm. Mediates ATP-dependent transport of glutathione and glutathione conjugates, leukotriene C4, estradiol-17-beta-o-glucuronide, methotrexate, antiviral drugs and other xenobiotics. Confers resistance to anticancer drugs by decreasing accumulation of drug in cells, and by mediating ATP- and GSH-dependent drug export. Hydrolyzes ATP with low efficiency. Catalyzes the export of sphingosine 1-phosphate from mast cells independently of their degranulation. Participates in inflammatory response by allowing export of leukotriene C4 from leukotriene C4-synthesizing cells. Mediates ATP-dependent, GSH-independent cyclic GMP-AMP (cGAMP) export. Thus, by limiting intracellular cGAMP concentrations negatively regulates the cGAS-STING pathway. Exports S-geranylgeranyl-glutathione (GGG) in lymphoid cells and stromal compartments of lymphoid organs. ABCC1 (via extracellular transport) with GGT5 (via GGG catabolism) establish GGG gradients within lymphoid tissues to position P2RY8-positive lymphocytes at germinal centers in lymphoid follicles and restrict their chemotactic transmigration from blood vessels to the bone marrow parenchyma. Mediates basolateral export of GSH-conjugated R- and S-prostaglandin A2 diastereomers in polarized epithelial cells. In Macaca fascicularis (Crab-eating macaque), this protein is Multidrug resistance-associated protein 1.